The following is an 86-amino-acid chain: Colicin-E9 immunity protein (86 aa).

The protein belongs to the colicins ColE2/ColE8/ColE9 and pyocins S1/S2 family.

Functionally, this protein is able to protect a cell, which harbors the plasmid ColE9 encoding colicin E9, against colicin E9, it binds specifically to the DNase-type colicin and inhibits its bactericidal activity. In Escherichia coli, this protein is Colicin-E9 immunity protein (imm).